The chain runs to 547 residues: Probable pectinesterase/pectinesterase inhibitor 12 (547 aa).

Residues 1-23 (MALSSFNLSSLLFLLFFTPSVFS) form the signal peptide. The segment at 31–185 (NPHETSATSF…YKHISNSLSA (155 aa)) is pectinesterase inhibitor 12. N131, N247, N260, and N303 each carry an N-linked (GlcNAc...) asparagine glycan. The pectinesterase 12 stretch occupies residues 237–533 (SLVVAADGTG…FTATEFITGD (297 aa)). Residues T312 and Q342 each contribute to the substrate site. D365 functions as the Proton donor; for pectinesterase activity in the catalytic mechanism. A disulfide bond links C379 and C399. Catalysis depends on D386, which acts as the Nucleophile; for pectinesterase activity. N-linked (GlcNAc...) asparagine glycosylation is found at N432 and N443. Substrate is bound by residues R454 and W456. N523 carries N-linked (GlcNAc...) asparagine glycosylation.

In the N-terminal section; belongs to the PMEI family. This sequence in the C-terminal section; belongs to the pectinesterase family. Expressed in siliques.

It localises to the secreted. The protein localises to the cell wall. The catalysed reaction is [(1-&gt;4)-alpha-D-galacturonosyl methyl ester](n) + n H2O = [(1-&gt;4)-alpha-D-galacturonosyl](n) + n methanol + n H(+). It functions in the pathway glycan metabolism; pectin degradation; 2-dehydro-3-deoxy-D-gluconate from pectin: step 1/5. In terms of biological role, acts in the modification of cell walls via demethylesterification of cell wall pectin. In Arabidopsis thaliana (Mouse-ear cress), this protein is Probable pectinesterase/pectinesterase inhibitor 12 (PME12).